The following is a 551-amino-acid chain: Lysine--tRNA ligase (551 aa).

Residues 54-62 (PSGLPHIGT) carry the 'HIGH' region motif. The 'KMSKS' region signature appears at 303-307 (KISKS). K306 serves as a coordination point for ATP.

This sequence belongs to the class-I aminoacyl-tRNA synthetase family.

It is found in the cytoplasm. The catalysed reaction is tRNA(Lys) + L-lysine + ATP = L-lysyl-tRNA(Lys) + AMP + diphosphate. This chain is Lysine--tRNA ligase, found in Brucella melitensis biotype 1 (strain ATCC 23456 / CCUG 17765 / NCTC 10094 / 16M).